A 360-amino-acid polypeptide reads, in one-letter code: Thiol protease SEN102 (360 aa).

The N-terminal stretch at 1 to 20 (MAKPKFIALALVALSFLSIA) is a signal peptide. Positions 21–133 (QSIPFTEKDL…ENVGSLPAAS (113 aa)) are cleaved as a propeptide — activation peptide. 3 disulfide bridges follow: Cys-151–Cys-193, Cys-185–Cys-225, and Cys-283–Cys-335. The active site involves Cys-154. Active-site residues include His-289 and Asn-310. A glycan (N-linked (GlcNAc...) asparagine) is linked at Asn-353. The short motif at 357 to 360 (RDEL) is the Prevents secretion from ER element.

It belongs to the peptidase C1 family.

Its subcellular location is the endoplasmic reticulum lumen. The sequence is that of Thiol protease SEN102 (SEN102) from Hemerocallis sp. (Daylily).